Consider the following 193-residue polypeptide: AP-3 complex subunit sigma-2 (193 aa).

Belongs to the adaptor complexes small subunit family. In terms of assembly, adaptor protein complex 3 (AP-3) is a heterotetramer composed of two large adaptins (delta-type subunit AP3D1 and beta-type subunit AP3B1 or AP3B2), a medium adaptin (mu-type subunit AP3M1 or AP3M2) and a small adaptin (sigma-type subunit APS1 or AP3S2). Interacts with AGAP1. AP-3 associates with the BLOC-1 complex. As to expression, present in all adult tissues examined.

Its subcellular location is the golgi apparatus. The protein resides in the cytoplasmic vesicle membrane. Part of the AP-3 complex, an adaptor-related complex which is not clathrin-associated. The complex is associated with the Golgi region as well as more peripheral structures. It facilitates the budding of vesicles from the Golgi membrane and may be directly involved in trafficking to lysosomes. In concert with the BLOC-1 complex, AP-3 is required to target cargos into vesicles assembled at cell bodies for delivery into neurites and nerve terminals. The chain is AP-3 complex subunit sigma-2 (AP3S2) from Homo sapiens (Human).